The chain runs to 202 residues: Dephospho-CoA kinase (202 aa).

Positions 5–202 constitute a DPCK domain; the sequence is ILGLTGGIGS…FYLTLRGGQP (198 aa). 13–18 is a binding site for ATP; the sequence is GSGKSA.

The protein belongs to the CoaE family.

Its subcellular location is the cytoplasm. It catalyses the reaction 3'-dephospho-CoA + ATP = ADP + CoA + H(+). It participates in cofactor biosynthesis; coenzyme A biosynthesis; CoA from (R)-pantothenate: step 5/5. In terms of biological role, catalyzes the phosphorylation of the 3'-hydroxyl group of dephosphocoenzyme A to form coenzyme A. This is Dephospho-CoA kinase from Stutzerimonas stutzeri (Pseudomonas stutzeri).